Consider the following 569-residue polypeptide: Proline--tRNA ligase (569 aa).

Belongs to the class-II aminoacyl-tRNA synthetase family. ProS type 1 subfamily. Homodimer.

The protein localises to the cytoplasm. The catalysed reaction is tRNA(Pro) + L-proline + ATP = L-prolyl-tRNA(Pro) + AMP + diphosphate. Functionally, catalyzes the attachment of proline to tRNA(Pro) in a two-step reaction: proline is first activated by ATP to form Pro-AMP and then transferred to the acceptor end of tRNA(Pro). As ProRS can inadvertently accommodate and process non-cognate amino acids such as alanine and cysteine, to avoid such errors it has two additional distinct editing activities against alanine. One activity is designated as 'pretransfer' editing and involves the tRNA(Pro)-independent hydrolysis of activated Ala-AMP. The other activity is designated 'posttransfer' editing and involves deacylation of mischarged Ala-tRNA(Pro). The misacylated Cys-tRNA(Pro) is not edited by ProRS. This is Proline--tRNA ligase from Dehalococcoides mccartyi (strain ATCC BAA-2100 / JCM 16839 / KCTC 5957 / BAV1).